A 516-amino-acid chain; its full sequence is RNA-binding region-containing protein 3 (516 aa).

Disordered stretches follow at residues 1–27, 106–130, 210–254, and 264–283; these read MAAPEQPLPMSRGCQNSSSLSPPRGDR, VHSPCPSLGTEKKKRSDDPVEDDKE, EDYM…DEDR, and ANLQPKRPKPIKQRHVRKKR. The residue at position 21 (Ser21) is a Phosphoserine. The 76-residue stretch at 27-102 folds into the RRM 1 domain; sequence RTLLVRHLPA…HTLVVEFAKE (76 aa). Ser108 carries the post-translational modification Phosphoserine. A compositionally biased stretch (basic and acidic residues) spans 115 to 130; it reads TEKKKRSDDPVEDDKE. Residues 217–230 are compositionally biased toward pro residues; it reads APLPPTSPQPPEEP. A compositionally biased stretch (basic residues) spans 269 to 283; it reads KRPKPIKQRHVRKKR. Positions 419-502 constitute an RRM 2 domain; it reads CRIYVKNLAK…KPMVVQFARS (84 aa).

Component of the U11/U12 snRNPs that are part of the U12-type spliceosome. Found in a complex with m(7)G-capped U12 snRNA. Interacts with PDCD7.

It localises to the nucleus. Functionally, participates in pre-mRNA U12-dependent splicing, performed by the minor spliceosome which removes U12-type introns. U12-type introns comprises less than 1% of all non-coding sequences. Binds to the 3'-stem-loop of m(7)G-capped U12 snRNA. The protein is RNA-binding region-containing protein 3 (RNPC3) of Bos taurus (Bovine).